Reading from the N-terminus, the 757-residue chain is Cellulose synthase-like protein B2 (757 aa).

Transmembrane regions (helical) follow at residues 24–44 (AVDLTILGLLFSLLLHRILYM) and 48–68 (GIIWLVAFLCESCFSFVWLLS). Active-site residues include Asp-136 and Asp-461. Helical transmembrane passes span 533–555 (AYLCVSICVRSIPELIYCLLPAY), 568–588 (LCLGITMLLAGMHCLYTLWEF), 607–627 (IVATSSWLFSIFDIILKLLGL), 672–692 (FLPGTFIVLVNLAALVGVFVG), 704–724 (GSGLGEACACILVVMLFFPFL), and 735–755 (IPLSTLSKAGFLAVSFVVFSV).

The protein belongs to the glycosyltransferase 2 family. Plant cellulose synthase-like B subfamily. In terms of tissue distribution, expressed in young seedlings, primarily in the root vascular tissue.

Its subcellular location is the golgi apparatus membrane. In terms of biological role, thought to be a Golgi-localized beta-glycan synthase that polymerize the backbones of noncellulosic polysaccharides (hemicelluloses) of plant cell wall. The polypeptide is Cellulose synthase-like protein B2 (CSLB2) (Arabidopsis thaliana (Mouse-ear cress)).